A 299-amino-acid polypeptide reads, in one-letter code: MPWLQLKAHIAPQHAETLEDLLLAEGAQVITLQDAHDDPVFEPESGTTPLWNETVLTGLYDDLEDIEPMLERVRQQWAAEMADEPCPEIDYELVADRDWEREWMDDFAPLKMGERLWVVPSWHEAPEPGAVNLLLDPGLAFGTGTHPTTALCLAWLDGLDLDASRVLDFGCGSGILAIAALKLGARHATGTDIDPQALQASRDNAQRNDVADEHLSLCYPERLADERHDVVVANILAGPLVELAPTLCAHLAPGGRLALSGILAGQAEEVMDAYREQGMLLDAPVEREGWVRITGKAPA.

Residues threonine 149, glycine 170, aspartate 192, and asparagine 234 each coordinate S-adenosyl-L-methionine.

This sequence belongs to the methyltransferase superfamily. PrmA family.

The protein resides in the cytoplasm. It catalyses the reaction L-lysyl-[protein] + 3 S-adenosyl-L-methionine = N(6),N(6),N(6)-trimethyl-L-lysyl-[protein] + 3 S-adenosyl-L-homocysteine + 3 H(+). Methylates ribosomal protein L11. In Chromohalobacter salexigens (strain ATCC BAA-138 / DSM 3043 / CIP 106854 / NCIMB 13768 / 1H11), this protein is Ribosomal protein L11 methyltransferase.